The sequence spans 323 residues: Mitochondrial glutamate carrier 1 (323 aa).

Solcar repeat units lie at residues 6–93 (ISLP…FRHQ), 101–214 (LTLL…LNQL), and 223–312 (SPFY…GIAE). The next 6 helical transmembrane spans lie at 12–32 (LING…IDLA), 62–82 (YFGM…EKAI), 107–127 (MLAG…MEML), 189–209 (GLGA…PLFA), 223–243 (SPFY…AVAV), and 292–312 (ALVI…GIAE).

The protein belongs to the mitochondrial carrier (TC 2.A.29) family. Expressed at high levels in brain, liver, and pancreas.

It localises to the mitochondrion inner membrane. It carries out the reaction L-glutamate(in) + H(+)(in) = L-glutamate(out) + H(+)(out). Mitochondrial glutamate/H(+) symporter. Responsible for the transport of glutamate from the cytosol into the mitochondrial matrix with the concomitant import of a proton. Plays a role in the control of glucose-stimulated insulin secretion. The sequence is that of Mitochondrial glutamate carrier 1 from Homo sapiens (Human).